Consider the following 393-residue polypeptide: UDP-N-acetylglucosamine--N-acetylmuramyl-(pentapeptide) pyrophosphoryl-undecaprenol N-acetylglucosamine transferase (393 aa).

UDP-N-acetyl-alpha-D-glucosamine is bound by residues 15 to 17 (TAG), Asn-129, Arg-171, Ser-211, and Gln-322.

Belongs to the glycosyltransferase 28 family. MurG subfamily.

It is found in the cell membrane. The catalysed reaction is di-trans,octa-cis-undecaprenyl diphospho-N-acetyl-alpha-D-muramoyl-L-alanyl-D-glutamyl-meso-2,6-diaminopimeloyl-D-alanyl-D-alanine + UDP-N-acetyl-alpha-D-glucosamine = di-trans,octa-cis-undecaprenyl diphospho-[N-acetyl-alpha-D-glucosaminyl-(1-&gt;4)]-N-acetyl-alpha-D-muramoyl-L-alanyl-D-glutamyl-meso-2,6-diaminopimeloyl-D-alanyl-D-alanine + UDP + H(+). It participates in cell wall biogenesis; peptidoglycan biosynthesis. Cell wall formation. Catalyzes the transfer of a GlcNAc subunit on undecaprenyl-pyrophosphoryl-MurNAc-pentapeptide (lipid intermediate I) to form undecaprenyl-pyrophosphoryl-MurNAc-(pentapeptide)GlcNAc (lipid intermediate II). In Bifidobacterium longum (strain DJO10A), this protein is UDP-N-acetylglucosamine--N-acetylmuramyl-(pentapeptide) pyrophosphoryl-undecaprenol N-acetylglucosamine transferase.